We begin with the raw amino-acid sequence, 314 residues long: Glycerol-1-phosphate dehydrogenase [NAD(P)+] (314 aa).

NAD(+) is bound by residues 52–56 (GKPLD) and 74–77 (TSAS). Asp-79 lines the substrate pocket. Ser-83 is a binding site for NAD(+). Residue Asp-131 coordinates substrate. Residues Asp-131 and His-211 each contribute to the Zn(2+) site. Residue His-215 participates in substrate binding. Residue His-231 participates in Zn(2+) binding.

It belongs to the glycerol-1-phosphate dehydrogenase family. Requires Zn(2+) as cofactor.

The protein localises to the cytoplasm. It catalyses the reaction sn-glycerol 1-phosphate + NAD(+) = dihydroxyacetone phosphate + NADH + H(+). The catalysed reaction is sn-glycerol 1-phosphate + NADP(+) = dihydroxyacetone phosphate + NADPH + H(+). It participates in membrane lipid metabolism; glycerophospholipid metabolism. In terms of biological role, catalyzes the NAD(P)H-dependent reduction of dihydroxyacetonephosphate (DHAP or glycerone phosphate) to glycerol 1-phosphate (G1P). The G1P thus generated is used as the glycerophosphate backbone of phospholipids in the cellular membranes of Archaea. In Korarchaeum cryptofilum (strain OPF8), this protein is Glycerol-1-phosphate dehydrogenase [NAD(P)+].